The sequence spans 228 residues: Calcyclin-binding protein (228 aa).

At alanine 2 the chain carries N-acetylalanine. Residues 2–80 form an interaction with SIAH1 region; sequence ASEELQKDLE…YTVKISNYGW (79 aa). Serine 3 is subject to Phosphoserine. An N6-acetyllysine mark is found at lysine 8 and lysine 19. Serine 34 bears the Phosphoserine mark. Residues 73-167 form the CS domain; the sequence is VKISNYGWDQ…VENTRWDYLT (95 aa). The tract at residues 73–228 is interaction with SKP1; it reads VKISNYGWDQ…EKQAKGDTEF (156 aa). N6-acetyllysine is present on residues lysine 85 and lysine 118. An interaction with S100A6 region spans residues 154–228; the sequence is CRKKVENTRW…EKQAKGDTEF (75 aa). In terms of domain architecture, SGS spans 168–228; it reads QVEKERKEKE…EKQAKGDTEF (61 aa).

In terms of assembly, interacts with protein of the S100 family S100A1, S100A6, S100B, S100P and S100A12 in a calcium-dependent manner. Component of some large E3 complex at least composed of UBE2D1, SIAH1, CACYBP/SIP, SKP1, APC and TBL1X. Interacts directly with SIAH1, SIAH2 and SKP1. In terms of processing, phosphorylated on serine residues. Phosphorylated upon induction by RA or at high calcium concentrations.

It localises to the cytoplasm. It is found in the nucleus. May be involved in calcium-dependent ubiquitination and subsequent proteasomal degradation of target proteins. Probably serves as a molecular bridge in ubiquitin E3 complexes. Participates in the ubiquitin-mediated degradation of beta-catenin (CTNNB1). This Pongo abelii (Sumatran orangutan) protein is Calcyclin-binding protein (CACYBP).